Here is a 166-residue protein sequence, read N- to C-terminus: Large ribosomal subunit protein uL10 (166 aa).

It belongs to the universal ribosomal protein uL10 family. Part of the ribosomal stalk of the 50S ribosomal subunit. The N-terminus interacts with L11 and the large rRNA to form the base of the stalk. The C-terminus forms an elongated spine to which L12 dimers bind in a sequential fashion forming a multimeric L10(L12)X complex.

Functionally, forms part of the ribosomal stalk, playing a central role in the interaction of the ribosome with GTP-bound translation factors. This is Large ribosomal subunit protein uL10 from Aeromonas salmonicida (strain A449).